The sequence spans 204 residues: Inactive ribonuclease-like protein 9 (204 aa).

The first 26 residues, 1–26, serve as a signal peptide directing secretion; that stretch reads MMRTLITIHPLPLLLLLQQLLQPVQF. 3 cysteine pairs are disulfide-bonded: C97-C152, C115-C167, and C122-C129. Residues N130 and N142 are each glycosylated (N-linked (GlcNAc...) asparagine).

The protein belongs to the pancreatic ribonuclease family.

The protein resides in the secreted. Its function is as follows. Does not exhibit any ribonuclease activity. The protein is Inactive ribonuclease-like protein 9 (RNASE9) of Symphalangus syndactylus (Siamang).